The following is a 439-amino-acid chain: Xylose isomerase (439 aa).

Catalysis depends on residues H101 and D104. The Mg(2+) site is built by E232, E268, H271, D296, D307, D309, and D339.

It belongs to the xylose isomerase family. In terms of assembly, homotetramer. The cofactor is Mg(2+).

It localises to the cytoplasm. It catalyses the reaction alpha-D-xylose = alpha-D-xylulofuranose. The sequence is that of Xylose isomerase from Haemophilus influenzae (strain PittEE).